A 239-amino-acid chain; its full sequence is 1-(5-phosphoribosyl)-5-[(5-phosphoribosylamino)methylideneamino] imidazole-4-carboxamide isomerase (239 aa).

Asp-8 functions as the Proton acceptor in the catalytic mechanism. The active-site Proton donor is Asp-129.

Belongs to the HisA/HisF family.

Its subcellular location is the cytoplasm. It carries out the reaction 1-(5-phospho-beta-D-ribosyl)-5-[(5-phospho-beta-D-ribosylamino)methylideneamino]imidazole-4-carboxamide = 5-[(5-phospho-1-deoxy-D-ribulos-1-ylimino)methylamino]-1-(5-phospho-beta-D-ribosyl)imidazole-4-carboxamide. Its pathway is amino-acid biosynthesis; L-histidine biosynthesis; L-histidine from 5-phospho-alpha-D-ribose 1-diphosphate: step 4/9. This is 1-(5-phosphoribosyl)-5-[(5-phosphoribosylamino)methylideneamino] imidazole-4-carboxamide isomerase from Bacillus cereus (strain AH187).